A 324-amino-acid polypeptide reads, in one-letter code: COP9 signalosome complex subunit 6 (324 aa).

In terms of domain architecture, MPN spans 38–171 (VALHPLVILN…VSVFESVIDI (134 aa)).

Belongs to the peptidase M67A family. CSN6 subfamily. Component of the CSN complex, composed of COPS1/GPS1, COPS2, COPS3, COPS4, COPS5, COPS6, COPS7 (COPS7A or COPS7B), COPS8 and COPS9. In the complex, it probably interacts directly with COPS2, COPS4, COPS5, COPS7 (COPS7A or COPS7B) and COPS9. Interacts with the translation initiation factor EIF3S6. Interacts weakly with RBX1. Directly interacts with COP1 and 14-3-3 protein sigma/SFN. Interacts with ERCC6.

Its subcellular location is the cytoplasm. It localises to the nucleus. Functionally, component of the COP9 signalosome complex (CSN), a complex involved in various cellular and developmental processes. The CSN complex is an essential regulator of the ubiquitin (Ubl) conjugation pathway by mediating the deneddylation of the cullin subunits of SCF-type E3 ligase complexes, leading to decrease the Ubl ligase activity of SCF-type complexes such as SCF, CSA or DDB2. The complex is also involved in phosphorylation of p53/TP53, c-jun/JUN, IkappaBalpha/NFKBIA, ITPK1 and IRF8, possibly via its association with CK2 and PKD kinases. CSN-dependent phosphorylation of TP53 and JUN promotes and protects degradation by the Ubl system, respectively. Has some glucocorticoid receptor-responsive activity. Stabilizes COP1 through reducing COP1 auto-ubiquitination and decelerating COP1 turnover rate, hence regulates the ubiquitination of COP1 targets, including SFN. This Mus musculus (Mouse) protein is COP9 signalosome complex subunit 6 (Cops6).